Consider the following 365-residue polypeptide: NADH-quinone oxidoreductase subunit H 2 (365 aa).

Helical transmembrane passes span 1 to 21, 71 to 91, 100 to 120, 136 to 156, 199 to 219, 254 to 274, 301 to 321, and 342 to 362; these read MFVV…VVWA, LAPV…PFAP, VGVF…FLAG, IAQV…VVLI, FVSW…VFFI, ILFL…VVLF, IAGY…VVFL, and WKIL…WVVW.

It belongs to the complex I subunit 1 family. In terms of assembly, NDH-1 is composed of 14 different subunits. Subunits NuoA, H, J, K, L, M, N constitute the membrane sector of the complex.

The protein localises to the cell inner membrane. It catalyses the reaction a quinone + NADH + 5 H(+)(in) = a quinol + NAD(+) + 4 H(+)(out). Its function is as follows. NDH-1 shuttles electrons from NADH, via FMN and iron-sulfur (Fe-S) centers, to quinones in the respiratory chain. The immediate electron acceptor for the enzyme in this species is believed to be ubiquinone. Couples the redox reaction to proton translocation (for every two electrons transferred, four hydrogen ions are translocated across the cytoplasmic membrane), and thus conserves the redox energy in a proton gradient. This subunit may bind ubiquinone. This chain is NADH-quinone oxidoreductase subunit H 2, found in Cytophaga hutchinsonii (strain ATCC 33406 / DSM 1761 / CIP 103989 / NBRC 15051 / NCIMB 9469 / D465).